A 557-amino-acid polypeptide reads, in one-letter code: Anti-Muellerian hormone type-2 receptor (557 aa).

The N-terminal stretch at 1 to 17 (MLGTLGLWTLLPAAAQV) is a signal peptide. Over 18-144 (SPNRRTCVFF…QEPQATPGGP (127 aa)) the chain is Extracellular. Cystine bridges form between Cys55–Cys79 and Cys92–Cys109. N-linked (GlcNAc...) asparagine glycosylation is present at Asn66. Asn119 carries an N-linked (GlcNAc...) asparagine glycan. The chain crosses the membrane as a helical span at residues 145-165 (IWMAQLLLGVFLVLLLSIIIL). At 166-557 (ALLQRKACRV…SVQQGSGSKS (392 aa)) the chain is on the cytoplasmic side. The region spanning 201-511 (LRFSQVIQEG…RLAALAYPQV (311 aa)) is the Protein kinase domain. ATP contacts are provided by residues 207–215 (IQEGGHAVV) and Lys228. Catalysis depends on Asp331, which acts as the Proton acceptor.

It belongs to the protein kinase superfamily. TKL Ser/Thr protein kinase family. TGFB receptor subfamily. As to quaternary structure, interacts with type I receptor ACVR1. Mg(2+) serves as cofactor. Requires Mn(2+) as cofactor.

The protein resides in the membrane. The catalysed reaction is L-threonyl-[receptor-protein] + ATP = O-phospho-L-threonyl-[receptor-protein] + ADP + H(+). It carries out the reaction L-seryl-[receptor-protein] + ATP = O-phospho-L-seryl-[receptor-protein] + ADP + H(+). Functionally, on ligand binding, forms a receptor complex consisting of two type II and two type I transmembrane serine/threonine kinases. Type II receptors phosphorylate and activate type I receptors which autophosphorylate, then bind and activate SMAD transcriptional regulators. Receptor for anti-Muellerian hormone. The protein is Anti-Muellerian hormone type-2 receptor (Amhr2) of Rattus norvegicus (Rat).